A 33-amino-acid chain; its full sequence is Photosystem II reaction center protein Psb30 (33 aa).

Residues 5–25 (VIAQLASLALIIVLGPLVIGL) traverse the membrane as a helical segment.

This sequence belongs to the Psb30/Ycf12 family. As to quaternary structure, PSII is composed of 1 copy each of membrane proteins PsbA, PsbB, PsbC, PsbD, PsbE, PsbF, PsbH, PsbI, PsbJ, PsbK, PsbL, PsbM, PsbT, PsbX, PsbY, PsbZ, Psb30/Ycf12, peripheral proteins of the oxygen-evolving complex and a large number of cofactors. It forms dimeric complexes.

Its subcellular location is the plastid. The protein resides in the chloroplast thylakoid membrane. In terms of biological role, a core subunit of photosystem II (PSII), probably helps stabilize the reaction center. The sequence is that of Photosystem II reaction center protein Psb30 from Chara vulgaris (Common stonewort).